The primary structure comprises 496 residues: Lysosomal Pro-X carboxypeptidase (496 aa).

A signal peptide spans 1 to 21 (MGRRALLLLLLSFLAPWATIA). Residues 22–45 (LRPALRALGSLHLPTNPTSLPAVA) constitute a propeptide that is removed on maturation. Asn-47 and Asn-101 each carry an N-linked (GlcNAc...) asparagine glycan. Catalysis depends on Ser-179, which acts as the Charge relay system. The segment at 194–334 (HMVVGALAAS…QNIFQALNVY (141 aa)) is SKS domain. 4 cysteine pairs are disulfide-bonded: Cys-215/Cys-372, Cys-233/Cys-310, Cys-264/Cys-343, and Cys-364/Cys-394. 3 N-linked (GlcNAc...) asparagine glycosylation sites follow: Asn-317, Asn-336, and Asn-345. Residue Asn-415 is glycosylated (N-linked (GlcNAc...) asparagine). Catalysis depends on charge relay system residues Asp-430 and His-455.

The protein belongs to the peptidase S28 family. As to quaternary structure, homodimer. In terms of tissue distribution, highest levels in placenta, lung and liver. Also present in heart, brain, pancreas and kidney.

The protein localises to the lysosome. The enzyme catalyses Cleavage of a -Pro-|-Xaa bond to release a C-terminal amino acid.. Cleaves C-terminal amino acids linked to proline in peptides such as angiotensin II, III and des-Arg9-bradykinin. This cleavage occurs at acidic pH, but enzymatic activity is retained with some substrates at neutral pH. The polypeptide is Lysosomal Pro-X carboxypeptidase (PRCP) (Homo sapiens (Human)).